A 143-amino-acid polypeptide reads, in one-letter code: Large ribosomal subunit protein uL13 (143 aa).

Belongs to the universal ribosomal protein uL13 family. In terms of assembly, part of the 50S ribosomal subunit.

Functionally, this protein is one of the early assembly proteins of the 50S ribosomal subunit, although it is not seen to bind rRNA by itself. It is important during the early stages of 50S assembly. The protein is Large ribosomal subunit protein uL13 of Variovorax paradoxus (strain S110).